The chain runs to 575 residues: Phosphoenolpyruvate-protein phosphotransferase (575 aa).

Residue His191 is the Tele-phosphohistidine intermediate of the active site. Positions 298 and 334 each coordinate phosphoenolpyruvate. Mg(2+) is bound by residues Glu435 and Asp459. Phosphoenolpyruvate is bound by residues 458-459 (ND) and Arg469. Residue Cys506 is the Proton donor of the active site.

The protein belongs to the PEP-utilizing enzyme family. In terms of assembly, homodimer. Mg(2+) is required as a cofactor.

The protein resides in the cytoplasm. The enzyme catalyses L-histidyl-[protein] + phosphoenolpyruvate = N(pros)-phospho-L-histidyl-[protein] + pyruvate. General (non sugar-specific) component of the phosphoenolpyruvate-dependent sugar phosphotransferase system (sugar PTS). This major carbohydrate active-transport system catalyzes the phosphorylation of incoming sugar substrates concomitantly with their translocation across the cell membrane. Enzyme I transfers the phosphoryl group from phosphoenolpyruvate (PEP) to the phosphoryl carrier protein (HPr). The chain is Phosphoenolpyruvate-protein phosphotransferase (ptsI) from Lactococcus lactis subsp. lactis (strain IL1403) (Streptococcus lactis).